Here is a 302-residue protein sequence, read N- to C-terminus: Sulfate adenylyltransferase subunit 2 (302 aa).

The interval 280–302 (RQGRLIDSDQSASMEQKKRQGYF) is disordered.

This sequence belongs to the PAPS reductase family. CysD subfamily. In terms of assembly, heterodimer composed of CysD, the smaller subunit, and CysN.

It catalyses the reaction sulfate + ATP + H(+) = adenosine 5'-phosphosulfate + diphosphate. It functions in the pathway sulfur metabolism; hydrogen sulfide biosynthesis; sulfite from sulfate: step 1/3. Functionally, with CysN forms the ATP sulfurylase (ATPS) that catalyzes the adenylation of sulfate producing adenosine 5'-phosphosulfate (APS) and diphosphate, the first enzymatic step in sulfur assimilation pathway. APS synthesis involves the formation of a high-energy phosphoric-sulfuric acid anhydride bond driven by GTP hydrolysis by CysN coupled to ATP hydrolysis by CysD. The sequence is that of Sulfate adenylyltransferase subunit 2 from Shewanella frigidimarina (strain NCIMB 400).